A 449-amino-acid polypeptide reads, in one-letter code: MLDKIVIANRGEIALRILRACKELGIKTVAVHSSADRDLKHVLLADETVCIGPAPSVKSYLNIPAIISAAEITGAVAIHPGYGFLSENANFAEQVERSGFIFIGPKAETIRLMGDKVSAIAAMKKAGVPCVPGSDGPLGDDMDKNRAIAKRIGYPVIIKASGGGGGRGMRVVRGDAELAQSISMTRAEAKAAFSNDMVYMEKYLENPRHVEIQVLADGQGNSIYLAERDCSMQRRHQKVVEEAPAPGITPELRRYIGERCAKACVDIGYRGAGTFEFLFENGEFYFIEMNTRIQVEHPVTEMITGVDLIKEQLRIAAGQPLSIKQEEVHVRGHAVECRINAEDPNTFLPSPGKITRFHAPGGFGVRWESHIYAGYTVPPYYDSMIGKLICYGENRDVAIARMKNALQELIIDGIKTNVDLQIRIMNDENFQHGGTNIHYLEKKLGLQEK.

The region spanning 1–445 is the Biotin carboxylation domain; the sequence is MLDKIVIANR…NIHYLEKKLG (445 aa). ATP contacts are provided by residues K116, K159, 165–166, 201–204, H209, and H236; these read GG and EKYL. The ATP-grasp domain occupies 120–317; sequence IAAMKKAGVP…LIKEQLRIAA (198 aa). K238 lines the hydrogencarbonate pocket. ATP contacts are provided by E276 and E288. 3 residues coordinate Mg(2+): E276, E288, and N290. The Mn(2+) site is built by E276, E288, and N290. 3 residues coordinate hydrogencarbonate: R292, V295, and R338. R292 is a catalytic residue. Biotin is bound at residue R338.

Acetyl-CoA carboxylase is a heterohexamer of biotin carboxyl carrier protein, biotin carboxylase and the two subunits of carboxyl transferase in a 2:2 complex. Mg(2+) is required as a cofactor. The cofactor is Mn(2+).

It catalyses the reaction N(6)-biotinyl-L-lysyl-[protein] + hydrogencarbonate + ATP = N(6)-carboxybiotinyl-L-lysyl-[protein] + ADP + phosphate + H(+). The protein operates within lipid metabolism; malonyl-CoA biosynthesis; malonyl-CoA from acetyl-CoA: step 1/1. In terms of biological role, this protein is a component of the acetyl coenzyme A carboxylase complex; first, biotin carboxylase catalyzes the carboxylation of the carrier protein and then the transcarboxylase transfers the carboxyl group to form malonyl-CoA. This chain is Biotin carboxylase (accC), found in Escherichia coli O157:H7.